Here is a 361-residue protein sequence, read N- to C-terminus: Deoxyribonuclease-2-beta (361 aa).

Residues 1 to 27 form the signal peptide; sequence MKQKMMARLLRTSFALLFLGLFGVLGA. 4 N-linked (GlcNAc...) asparagine glycosylation sites follow: asparagine 81, asparagine 103, asparagine 119, and asparagine 278.

It belongs to the DNase II family. As to expression, highly expressed in the eye lens and in salivary gland. Detected at lower levels in lung, prostate and lymph node. Isoform 2 is lung specific.

The protein localises to the lysosome. The catalysed reaction is Endonucleolytic cleavage to nucleoside 3'-phosphates and 3'-phosphooligonucleotide end-products.. Hydrolyzes DNA under acidic conditions. Does not require divalent cations for activity. Participates in the degradation of nuclear DNA during lens cell differentiation. This is Deoxyribonuclease-2-beta (DNASE2B) from Homo sapiens (Human).